An 85-amino-acid chain; its full sequence is UPF0434 protein HNE_3545 (85 aa).

This sequence belongs to the UPF0434 family.

This chain is UPF0434 protein HNE_3545, found in Hyphomonas neptunium (strain ATCC 15444).